The following is a 249-amino-acid chain: Proteasome subunit alpha type-4 (249 aa).

The protein belongs to the peptidase T1A family. The 26S proteasome consists of a 20S proteasome core and two 19S regulatory subunits. The 20S proteasome core is composed of 28 subunits that are arranged in four stacked rings, resulting in a barrel-shaped structure. The two end rings are each formed by seven alpha subunits, and the two central rings are each formed by seven beta subunits. The catalytic chamber with the active sites is on the inside of the barrel.

It localises to the cytoplasm. The protein localises to the nucleus. In terms of biological role, the proteasome is a multicatalytic proteinase complex which is characterized by its ability to cleave peptides with Arg, Phe, Tyr, Leu, and Glu adjacent to the leaving group at neutral or slightly basic pH. The proteasome has an ATP-dependent proteolytic activity. This chain is Proteasome subunit alpha type-4 (PAC1), found in Petunia hybrida (Petunia).